Here is a 319-residue protein sequence, read N- to C-terminus: Cytochrome f (319 aa).

An N-terminal signal peptide occupies residues M1–A35. Heme-binding residues include Y36, C56, C59, and H60. A helical transmembrane segment spans residues V285–K305.

This sequence belongs to the cytochrome f family. The 4 large subunits of the cytochrome b6-f complex are cytochrome b6, subunit IV (17 kDa polypeptide, petD), cytochrome f and the Rieske protein, while the 4 small subunits are PetG, PetL, PetM and PetN. The complex functions as a dimer. Heme is required as a cofactor.

It localises to the plastid. The protein resides in the chloroplast thylakoid membrane. Its function is as follows. Component of the cytochrome b6-f complex, which mediates electron transfer between photosystem II (PSII) and photosystem I (PSI), cyclic electron flow around PSI, and state transitions. The polypeptide is Cytochrome f (Physcomitrium patens (Spreading-leaved earth moss)).